Consider the following 361-residue polypeptide: Rhomboid domain-containing protein 2 (361 aa).

Helical transmembrane passes span 19-39 (SATF…LFLL), 63-83 (LVTY…AIII), 100-120 (CFFT…FESV), 158-178 (FGVV…SWLI), and 182-202 (SFLS…TYCY). Disordered regions lie at residues 265–287 (PSYP…PPGH) and 318–361 (PASA…VAMP). 2 stretches are compositionally biased toward polar residues: residues 267–276 (YPVTQMQHAS) and 318–328 (PASAGTSQGVQ).

It belongs to the peptidase S54 family. As to quaternary structure, might form homotrimers; these trimers are only formed in retina. In terms of tissue distribution, widely expressed, including in retina and brain (at protein level), as well as in kidney, testis and ovary. Expressed in all layers of the retina, including inner segments of photoreceptor cells and ganglion cells (at protein level).

The protein localises to the golgi apparatus. The protein resides in the cis-Golgi network membrane. The sequence is that of Rhomboid domain-containing protein 2 (Rhbdd2) from Mus musculus (Mouse).